The following is a 201-amino-acid chain: Recombination protein RecR (201 aa).

Residues 60–75 (CKVCGNIDTQNPCTVC) form a C4-type zinc finger. Positions 83–178 (SIIVVVADVA…KVTRLAHGVP (96 aa)) constitute a Toprim domain.

Belongs to the RecR family.

Functionally, may play a role in DNA repair. It seems to be involved in an RecBC-independent recombinational process of DNA repair. It may act with RecF and RecO. In Rhodopseudomonas palustris (strain BisB18), this protein is Recombination protein RecR.